Reading from the N-terminus, the 145-residue chain is Sperm mitochondrial-associated cysteine-rich protein (145 aa).

Phosphoserine is present on residues S38, S45, S113, and S131. Positions 105–145 (CSSENKTESDSDGSGQTQDRGAQTQQSPQGGQGNWNQKKTK) are disordered. The segment covering 116 to 145 (DGSGQTQDRGAQTQQSPQGGQGNWNQKKTK) has biased composition (polar residues).

In terms of tissue distribution, testis. Selectively expressed in the spermatids of seminiferous tubules and in flagella of epididymal sperm.

The protein resides in the cytoplasm. It localises to the mitochondrion membrane. Functionally, involved in sperm motility. Its absence is associated with genetic background dependent male infertility. Infertility may be due to reduced sperm motility in the female reproductive tract and inability to penetrate the oocyte zona pellucida. The protein is Sperm mitochondrial-associated cysteine-rich protein (Smcp) of Rattus norvegicus (Rat).